The following is a 225-amino-acid chain: UPF0758 protein Ping_0056 (225 aa).

The MPN domain maps to 103-225; sequence ALTSAAQTKA…CTSFAENGWI (123 aa). Residues His-174, His-176, and Asp-187 each coordinate Zn(2+). The short motif at 174-187 is the JAMM motif element; it reads HNHPSGDPSASEAD.

Belongs to the UPF0758 family.

The sequence is that of UPF0758 protein Ping_0056 from Psychromonas ingrahamii (strain DSM 17664 / CCUG 51855 / 37).